The primary structure comprises 331 residues: Probable leucine carboxyl methyltransferase 1 (331 aa).

S-adenosyl-L-methionine is bound by residues Arg-82, Gly-107, Asp-131, 179 to 180 (DL), and Glu-206.

The protein belongs to the methyltransferase superfamily. LCMT family.

It carries out the reaction [phosphatase 2A protein]-C-terminal L-leucine + S-adenosyl-L-methionine = [phosphatase 2A protein]-C-terminal L-leucine methyl ester + S-adenosyl-L-homocysteine. Functionally, methylates the carboxyl group of the C-terminal leucine residue of protein phosphatase 2A catalytic subunits to form alpha-leucine ester residues. The polypeptide is Probable leucine carboxyl methyltransferase 1 (Caenorhabditis briggsae).